Here is a 359-residue protein sequence, read N- to C-terminus: tRNA-specific 2-thiouridylase MnmA (359 aa).

ATP is bound by residues 9-16 (GLSGGVDS) and Met35. Positions 95-97 (NPD) are interaction with target base in tRNA. Catalysis depends on Cys100, which acts as the Nucleophile. Cys100 and Cys197 form a disulfide bridge. Residue Gly124 participates in ATP binding. Residues 147-149 (KDQ) are interaction with tRNA. Catalysis depends on Cys197, which acts as the Cysteine persulfide intermediate. Positions 309 to 310 (RY) are interaction with tRNA.

It belongs to the MnmA/TRMU family.

The protein resides in the cytoplasm. It carries out the reaction S-sulfanyl-L-cysteinyl-[protein] + uridine(34) in tRNA + AH2 + ATP = 2-thiouridine(34) in tRNA + L-cysteinyl-[protein] + A + AMP + diphosphate + H(+). Catalyzes the 2-thiolation of uridine at the wobble position (U34) of tRNA, leading to the formation of s(2)U34. The protein is tRNA-specific 2-thiouridylase MnmA of Cupriavidus metallidurans (strain ATCC 43123 / DSM 2839 / NBRC 102507 / CH34) (Ralstonia metallidurans).